The primary structure comprises 313 residues: Aspartate carbamoyltransferase catalytic subunit (313 aa).

Arg58 and Thr59 together coordinate carbamoyl phosphate. Lys86 lines the L-aspartate pocket. Carbamoyl phosphate is bound by residues Arg108, His136, and Gln139. 2 residues coordinate L-aspartate: Arg169 and Arg223. Carbamoyl phosphate-binding residues include Gly265 and Pro266.

The protein belongs to the aspartate/ornithine carbamoyltransferase superfamily. ATCase family. Heterododecamer (2C3:3R2) of six catalytic PyrB chains organized as two trimers (C3), and six regulatory PyrI chains organized as three dimers (R2).

It catalyses the reaction carbamoyl phosphate + L-aspartate = N-carbamoyl-L-aspartate + phosphate + H(+). The protein operates within pyrimidine metabolism; UMP biosynthesis via de novo pathway; (S)-dihydroorotate from bicarbonate: step 2/3. In terms of biological role, catalyzes the condensation of carbamoyl phosphate and aspartate to form carbamoyl aspartate and inorganic phosphate, the committed step in the de novo pyrimidine nucleotide biosynthesis pathway. This chain is Aspartate carbamoyltransferase catalytic subunit, found in Anaeromyxobacter sp. (strain K).